A 145-amino-acid chain; its full sequence is LIRP (145 aa).

The segment at residues 1-19 is a signal peptide (or 22); it reads MWKLCLRLLAVLAVCLSTA. Propeptides lie at residues 20–33 and 117–122; these read TQAQ…SPKR and FRRRTR. Disulfide bonds link Cys44–Cys129, Cys56–Cys142, and Cys128–Cys133.

It belongs to the insulin family. As to quaternary structure, heterodimer of a B chain and an A chain linked by two disulfide bonds.

It localises to the secreted. The sequence is that of LIRP from Locusta migratoria (Migratory locust).